We begin with the raw amino-acid sequence, 325 residues long: Probable cell division protein WhiA (325 aa).

A DNA-binding region (H-T-H motif) is located at residues 280-313; it reads SLKELGSMLKNPLGKSGVNHRLRKIDKIAEELRK.

This sequence belongs to the WhiA family.

In terms of biological role, involved in cell division and chromosome segregation. The protein is Probable cell division protein WhiA of Caldicellulosiruptor saccharolyticus (strain ATCC 43494 / DSM 8903 / Tp8T 6331).